A 388-amino-acid polypeptide reads, in one-letter code: Succinate--CoA ligase [ADP-forming] subunit beta (388 aa).

ATP-binding positions include lysine 46, 53–55 (GRG), glutamate 99, cysteine 102, and glutamate 107. Mg(2+) is bound by residues asparagine 199 and aspartate 213. Residues asparagine 264 and 321-323 (GIV) contribute to the substrate site.

This sequence belongs to the succinate/malate CoA ligase beta subunit family. In terms of assembly, heterotetramer of two alpha and two beta subunits. It depends on Mg(2+) as a cofactor.

It catalyses the reaction succinate + ATP + CoA = succinyl-CoA + ADP + phosphate. The catalysed reaction is GTP + succinate + CoA = succinyl-CoA + GDP + phosphate. Its pathway is carbohydrate metabolism; tricarboxylic acid cycle; succinate from succinyl-CoA (ligase route): step 1/1. Succinyl-CoA synthetase functions in the citric acid cycle (TCA), coupling the hydrolysis of succinyl-CoA to the synthesis of either ATP or GTP and thus represents the only step of substrate-level phosphorylation in the TCA. The beta subunit provides nucleotide specificity of the enzyme and binds the substrate succinate, while the binding sites for coenzyme A and phosphate are found in the alpha subunit. This chain is Succinate--CoA ligase [ADP-forming] subunit beta, found in Actinobacillus pleuropneumoniae serotype 3 (strain JL03).